Consider the following 763-residue polypeptide: ATP-dependent RNA helicase glh-1 (763 aa).

Positions 1–30 are disordered; sequence MSDGWSDSESAAKAKTGFGSGGGFGGGNNG. The span at 18-30 shows a compositional bias: gly residues; that stretch reads FGSGGGFGGGNNG. 7 repeat units span residues 24–33, 34–43, 44–53, 54–63, 64–73, 74–83, and 84–93. Residues 24 to 93 form a 7 X 10 AA tandem repeats, Gly-rich region; that stretch reads FGGGNNGGSG…FGGGSTGGSP (70 aa). 2 CCHC-type zinc fingers span residues 158 to 175 and 183 to 200; these read NNCF…DCPE and RVCY…ECTE. The segment at 193–230 is disordered; the sequence is HTSRECTEERKPREGRTGGFGGGAGFGNNGGNDGFGGD. Residues 194–208 show a composition bias toward basic and acidic residues; sequence TSRECTEERKPREGR. Positions 209-230 are enriched in gly residues; it reads TGGFGGGAGFGNNGGNDGFGGD. 2 CCHC-type zinc fingers span residues 242 to 259 and 262 to 279; these read MKCF…ECPE and RGCF…ECPN. The Q motif signature appears at 341-369; sequence KTFAEANLTETMQKNVAHAGYSKTTPIQQ. In terms of domain architecture, Helicase ATP-binding spans 372 to 556; it reads LPLVHQGYDI…RAFLRENYVM (185 aa). 385–392 lines the ATP pocket; the sequence is AQTGSGKT. The short motif at 423–427 is the Phosphodegron element; that stretch reads ILTPT. Residues 499-502 carry the DEAD box motif; the sequence is DEAD. The 148-residue stretch at 592–739 folds into the Helicase C-terminal domain; sequence DIDSYTTEKS…IVPDWMQGAA (148 aa).

This sequence belongs to the DEAD box helicase family. DDX4/VASA subfamily. Interacts with csn-5; this may prevent glh-1 degradation induced by kgb-1. Interacts with zyx-1. Interacts (via the N-terminal region containing the four CCHC zinc fingers) with pan-1. Interacts with kgb-1; this may promote glh-1 degradation by the proteasome. In terms of processing, phosphorylated by kgb-1 (in vitro); this may be responsible for its degradation by the proteasome.

Its subcellular location is the cytoplasm. It is found in the cytoplasmic granule. The protein localises to the perinuclear region. The enzyme catalyses ATP + H2O = ADP + phosphate + H(+). Functionally, probable ATP-binding RNA helicase. May act redundantly with the P-granule component glh-4 to regulate the formation of the granular structure of P-granules in embryos. Plays a role in positively regulating the localization of pgl-1 to P-granules. May play a role in transgenerational epigenetic inheritance. May protect somatic cells from excessive apoptosis during normal development. In Caenorhabditis elegans, this protein is ATP-dependent RNA helicase glh-1.